The primary structure comprises 449 residues: Ribulose bisphosphate carboxylase large chain (449 aa).

At Lys7 the chain carries N6,N6,N6-trimethyllysine. Asn116 and Thr166 together coordinate substrate. Residue Lys168 is the Proton acceptor of the active site. Substrate is bound at residue Lys170. Mg(2+) is bound by residues Lys194, Asp196, and Glu197. Residue Lys194 is modified to N6-carboxylysine. Catalysis depends on His287, which acts as the Proton acceptor. Substrate contacts are provided by Arg288, His320, and Ser372.

This sequence belongs to the RuBisCO large chain family. Type I subfamily. In terms of assembly, heterohexadecamer of 8 large chains and 8 small chains; disulfide-linked. The disulfide link is formed within the large subunit homodimers. Requires Mg(2+) as cofactor. Post-translationally, the disulfide bond which can form in the large chain dimeric partners within the hexadecamer appears to be associated with oxidative stress and protein turnover.

It localises to the plastid. The protein resides in the chloroplast. The enzyme catalyses 2 (2R)-3-phosphoglycerate + 2 H(+) = D-ribulose 1,5-bisphosphate + CO2 + H2O. The catalysed reaction is D-ribulose 1,5-bisphosphate + O2 = 2-phosphoglycolate + (2R)-3-phosphoglycerate + 2 H(+). In terms of biological role, ruBisCO catalyzes two reactions: the carboxylation of D-ribulose 1,5-bisphosphate, the primary event in carbon dioxide fixation, as well as the oxidative fragmentation of the pentose substrate in the photorespiration process. Both reactions occur simultaneously and in competition at the same active site. This Aspidistra elatior (Cast-iron plant) protein is Ribulose bisphosphate carboxylase large chain.